A 161-amino-acid chain; its full sequence is Type IV major fimbrial protein FimA (161 aa).

Positions 1 to 7 (MKSLQKG) are cleaved as a propeptide — leader sequence. Phenylalanine 8 is modified (N-methylphenylalanine). A helical membrane pass occupies residues 8–28 (FTLIELMIVVAIIGILAAFAI). The cysteines at positions 63 and 105 are disulfide-linked.

It belongs to the N-Me-Phe pilin family. The pili are polar flexible filaments of about 5.4 nanometers diameter and 2.5 micrometers average length; they consist of only a single polypeptide chain arranged in a helical configuration of five subunits per turn in the assembled pilus.

Its subcellular location is the fimbrium. It localises to the membrane. Functionally, major component of the type IV fimbriae that plays an essential role in twitching motility, natural transformation, and protease secretion. The polypeptide is Type IV major fimbrial protein FimA (fimA) (Dichelobacter nodosus (Bacteroides nodosus)).